Consider the following 539-residue polypeptide: Membrane protein insertase YidC (539 aa).

The chain crosses the membrane as a helical span at residues 6 to 26 (NILLIALALVSFLLFQQWNVA). The segment covering 35–44 (EQAQSGSTLP) has biased composition (polar residues). Residues 35–55 (EQAQSGSTLPAPSYADDLDPA) are disordered. A run of 4 helical transmembrane segments spans residues 341-361 (SFIQ…TFIV), 416-436 (LGGC…YWAL), 454-474 (LSAQ…MFLI), and 495-515 (PVMF…YWLV).

It belongs to the OXA1/ALB3/YidC family. Type 1 subfamily. Interacts with the Sec translocase complex via SecD. Specifically interacts with transmembrane segments of nascent integral membrane proteins during membrane integration.

It is found in the cell inner membrane. Its function is as follows. Required for the insertion and/or proper folding and/or complex formation of integral membrane proteins into the membrane. Involved in integration of membrane proteins that insert both dependently and independently of the Sec translocase complex, as well as at least some lipoproteins. Aids folding of multispanning membrane proteins. This chain is Membrane protein insertase YidC, found in Vibrio atlanticus (strain LGP32) (Vibrio splendidus (strain Mel32)).